The sequence spans 333 residues: UDP-N-acetylglucosamine--N-acetylmuramyl-(pentapeptide) pyrophosphoryl-undecaprenol N-acetylglucosamine transferase (333 aa).

UDP-N-acetyl-alpha-D-glucosamine is bound by residues Thr-10–Gly-12, Asn-124, Ser-177, and Gln-275.

Belongs to the glycosyltransferase 28 family. MurG subfamily.

It is found in the cell inner membrane. The catalysed reaction is di-trans,octa-cis-undecaprenyl diphospho-N-acetyl-alpha-D-muramoyl-L-alanyl-D-glutamyl-meso-2,6-diaminopimeloyl-D-alanyl-D-alanine + UDP-N-acetyl-alpha-D-glucosamine = di-trans,octa-cis-undecaprenyl diphospho-[N-acetyl-alpha-D-glucosaminyl-(1-&gt;4)]-N-acetyl-alpha-D-muramoyl-L-alanyl-D-glutamyl-meso-2,6-diaminopimeloyl-D-alanyl-D-alanine + UDP + H(+). The protein operates within cell wall biogenesis; peptidoglycan biosynthesis. Functionally, cell wall formation. Catalyzes the transfer of a GlcNAc subunit on undecaprenyl-pyrophosphoryl-MurNAc-pentapeptide (lipid intermediate I) to form undecaprenyl-pyrophosphoryl-MurNAc-(pentapeptide)GlcNAc (lipid intermediate II). This is UDP-N-acetylglucosamine--N-acetylmuramyl-(pentapeptide) pyrophosphoryl-undecaprenol N-acetylglucosamine transferase from Nitratiruptor sp. (strain SB155-2).